The primary structure comprises 697 residues: Alpha-1,4-glucan:maltose-1-phosphate maltosyltransferase (697 aa).

Lysine 284 lines the alpha-maltose 1-phosphate pocket. A disordered region spans residues 286–305 (RNNSVTAAPGDVGSPWAIGS). Alpha-maltose 1-phosphate contacts are provided by glutamine 344 and aspartate 379. The Nucleophile role is filled by aspartate 414. Asparagine 415 serves as a coordination point for alpha-maltose 1-phosphate. The active-site Proton donor is the glutamate 443. Residue 553–554 (KY) coordinates alpha-maltose 1-phosphate.

This sequence belongs to the glycosyl hydrolase 13 family. GlgE subfamily. Homodimer.

It catalyses the reaction alpha-maltose 1-phosphate + [(1-&gt;4)-alpha-D-glucosyl](n) = [(1-&gt;4)-alpha-D-glucosyl](n+2) + phosphate. The protein operates within glycan biosynthesis; glycogen biosynthesis. With respect to regulation, the transfer reaction from maltose-1-P to glycogen is inhibited by micromolar amounts of inorganic phosphate or arsenate but is only slightly inhibited by millimolar concentrations of glucose-1-P, glucose-6-P, or inorganic pyrophosphate. Is also inhibited by ATP, by 1,4-dideoxy-1,4-imino-D-arabinitol (DIA), but not by isofagomine. In terms of biological role, maltosyltransferase that uses maltose 1-phosphate (M1P) as the sugar donor to elongate linear or branched alpha-(1-&gt;4)-glucans. Is also able to catalyze the reverse reaction in vitro. Cannot use glucose 1-phosphate as substrate. Is involved in a branched alpha-glucan biosynthetic pathway from trehalose, together with TreS, Mak and GlgB. This is Alpha-1,4-glucan:maltose-1-phosphate maltosyltransferase (glgE) from Mycolicibacterium smegmatis (strain ATCC 700084 / mc(2)155) (Mycobacterium smegmatis).